A 519-amino-acid polypeptide reads, in one-letter code: Glycogen synthase (519 aa).

The segment at 1–40 is disordered; that stretch reads MISAAVEPHVDAFKPDNREPLTPDFATTGKAPGAQRQHNP. Over residues 8 to 21 the composition is skewed to basic and acidic residues; it reads PHVDAFKPDNREPL. Residue Lys57 participates in ADP-alpha-D-glucose binding.

The protein belongs to the glycosyltransferase 1 family. Bacterial/plant glycogen synthase subfamily.

The enzyme catalyses [(1-&gt;4)-alpha-D-glucosyl](n) + ADP-alpha-D-glucose = [(1-&gt;4)-alpha-D-glucosyl](n+1) + ADP + H(+). The protein operates within glycan biosynthesis; glycogen biosynthesis. Functionally, synthesizes alpha-1,4-glucan chains using ADP-glucose. This chain is Glycogen synthase, found in Pseudomonas putida (strain ATCC 47054 / DSM 6125 / CFBP 8728 / NCIMB 11950 / KT2440).